Consider the following 330-residue polypeptide: 5'-AMP-activated protein kinase subunit gamma-1 (330 aa).

Positions 1 to 21 (MESVAAESSPALENEHFQETP) are disordered. 3 consecutive CBS domains span residues 42–102 (PTSS…KSAL), 124–186 (SFKP…PKPE), and 197–259 (IGTY…NLDV). Residues R69, 84–89 (MLTITD), V129, 150–151 (HR), and K169 contribute to the ADP site. AMP contacts are provided by residues R69, 84–89 (MLTITD), V129, H150, 150–151 (HR), K169, T199, A204, 225–226 (SA), and 241–244 (SKFD). ATP is bound by residues R69, 84-89 (MLTITD), V129, 150-151 (HR), R151, and K169. The AMPK pseudosubstrate signature appears at 137–158 (LFDAVSSLIRNKIHRLPVIDPE). 241-244 (SKFD) serves as a coordination point for ADP. Position 241–244 (241–244 (SKFD)) interacts with ATP. S260 is subject to Phosphoserine; by ULK1. T262 carries the post-translational modification Phosphothreonine; by ULK1. Residue R268 coordinates ADP. R268 provides a ligand contact to AMP. R268 is a binding site for ATP. Residue S269 is modified to Phosphoserine; by ULK1. The 58-residue stretch at 271 to 328 (YFEGVLKCYLHETLETIINRLVEAEVHRLVVVDEHDVVKGIVSLSDILQALVLTGGEK) folds into the CBS 4 domain. ADP contacts are provided by residues L276 and 297–298 (HR). Residues L276, H297, 297–298 (HR), and 313–316 (SLSD) each bind AMP. Residues L276 and 297-298 (HR) contribute to the ATP site.

This sequence belongs to the 5'-AMP-activated protein kinase gamma subunit family. AMPK is a heterotrimer of an alpha catalytic subunit (PRKAA1 or PRKAA2), a beta (PRKAB1 or PRKAB2) and a gamma non-catalytic subunits (PRKAG1, PRKAG2 or PRKAG3). Interacts with FNIP1 and FNIP2. In terms of processing, phosphorylated by ULK1 and ULK2; leading to negatively regulate AMPK activity and suggesting the existence of a regulatory feedback loop between ULK1, ULK2 and AMPK. Post-translationally, glycosylated; O-GlcNAcylated by OGT, promoting the AMP-activated protein kinase (AMPK) activity.

Functionally, AMP/ATP-binding subunit of AMP-activated protein kinase (AMPK), an energy sensor protein kinase that plays a key role in regulating cellular energy metabolism. In response to reduction of intracellular ATP levels, AMPK activates energy-producing pathways and inhibits energy-consuming processes: inhibits protein, carbohydrate and lipid biosynthesis, as well as cell growth and proliferation. AMPK acts via direct phosphorylation of metabolic enzymes, and by longer-term effects via phosphorylation of transcription regulators. Also acts as a regulator of cellular polarity by remodeling the actin cytoskeleton; probably by indirectly activating myosin. Gamma non-catalytic subunit mediates binding to AMP, ADP and ATP, leading to activate or inhibit AMPK: AMP-binding results in allosteric activation of alpha catalytic subunit (PRKAA1 or PRKAA2) both by inducing phosphorylation and preventing dephosphorylation of catalytic subunits. ADP also stimulates phosphorylation, without stimulating already phosphorylated catalytic subunit. ATP promotes dephosphorylation of catalytic subunit, rendering the AMPK enzyme inactive. This Mus musculus (Mouse) protein is 5'-AMP-activated protein kinase subunit gamma-1 (Prkag1).